Reading from the N-terminus, the 769-residue chain is Disintegrin and metalloproteinase domain-containing protein 11 (769 aa).

A signal peptide spans 1 to 23 (MRLLRRWAFAALLLSLLPTPGLG). Positions 24–225 (TQGPAGALRW…PNRPRLRRKR (202 aa)) are excised as a propeptide. Residues 40 to 78 (GGPGAPEVTEPSRLVRESSGGEVRKQQLDTRVRQEPPGG) form a disordered region. Residues 61 to 73 (EVRKQQLDTRVRQ) show a composition bias toward basic and acidic residues. N-linked (GlcNAc...) asparagine glycans are attached at residues Asn96 and Asn163. Topologically, residues 226 to 734 (QVRRGHPTVH…ERYKGPSGTN (509 aa)) are extracellular. The 200-residue stretch at 239–438 (KYVELIVIND…GGGSCLFNKP (200 aa)) folds into the Peptidase M12B domain. Residues 332-769 (GRTFQSTSSG…NIRRGRSGGA (438 aa)) are required for localization to cerebellar cortex basket cell terminals. Also required for localization of KCNA1, KCNA2, DLG4 and ADAM22 to cerebellar cortex basket cell terminal perisomatic axons and pinceaux. Disulfide bonds link Cys349–Cys433, Cys392–Cys417, Cys394–Cys401, and Cys503–Cys523. Positions 444–531 (PPECGNGFVE…QCPPNLHKLD (88 aa)) constitute a Disintegrin domain. Residues Asn605 and Asn673 are each glycosylated (N-linked (GlcNAc...) asparagine). 3 disulfides stabilise this stretch: Cys677–Cys692, Cys686–Cys698, and Cys700–Cys709. One can recognise an EGF-like domain in the interval 677 to 709 (CPGSGERRICSHHGVCSNEGKCICQPDWTGKDC). The chain crosses the membrane as a helical span at residues 735 to 755 (IIIGSIAGAVLVAAIVLGGTG). Topologically, residues 756 to 769 (WGFKNIRRGRSGGA) are cytoplasmic.

In terms of assembly, interacts with LGI1 and LGI4. Interacts with KCNA1/KV1.1, KCNA2/KV1.2, DLG4/PSD-95 and ADAM22. The precursor is cleaved by a furin endopeptidase. Expressed predominantly in brain. Slightly detected or not at all in other tissues.

The protein localises to the presynaptic cell membrane. It localises to the perikaryon. The protein resides in the cell projection. Its subcellular location is the axon. Functionally, probable ligand for integrin in the brain. This is a non catalytic metalloprotease-like protein. Required for localization of the potassium channel subunit proteins KCNA1/KV1.1 and KCNA2/KV1.2 at cerebellar cortex basket cell distal terminals, is thereby involved in ephaptic inhibitory synchronization of Purkinje cell firing and response to stress. Plays a role in spatial learning and motor coordination. Involved in the nociceptive pain response to chemical-derived stimulation. This is Disintegrin and metalloproteinase domain-containing protein 11 (ADAM11) from Homo sapiens (Human).